We begin with the raw amino-acid sequence, 363 residues long: Protein-arginine kinase (363 aa).

In terms of domain architecture, Phosphagen kinase C-terminal spans 24–254 (IVLSSRIRLA…AQLIEQERSA (231 aa)). 27-31 (SSRIR) provides a ligand contact to ATP. A phosphoarginine; by autocatalysis mark is found at Arg29, Arg40, and Arg86. Residues His92, Arg125, and 176-180 (RASVM) contribute to the ATP site. Arg190 carries the phosphoarginine; by autocatalysis modification. Residue 207–212 (RGIYGE) coordinates ATP. Phosphoarginine; by autocatalysis is present on residues Arg255, Arg269, and Arg272. An RDXXRA motif of the pArg binding pocket involved in allosteric regulation motif is present at residues 337–342 (RDIRRA). Position 346 is a phosphoarginine; by autocatalysis (Arg346).

It belongs to the ATP:guanido phosphotransferase family. Interacts with CtsR in its autophosphorylated form. Interacts with McsA in nonstressed as well as in heat-stressed cells, whereas strongly interacts with ClpC only in nonstressed cells. In terms of processing, autophosphorylated on Arg residues. Phosphorylation on Arg-40 and Arg-86 are up-regulated upon stress conditions.

Its subcellular location is the cytoplasm. The catalysed reaction is L-arginyl-[protein] + ATP = N(omega)-phospho-L-arginyl-[protein] + ADP + H(+). With respect to regulation, appears to be allosterically activated by the binding of pArg-containing polypeptides to the pArg-binding pocket localized in the C-terminal domain of McsB. The McsB kinase is inhibited in nonstressed cells by direct interaction with ClpC; upon heat exposure, the interaction of McsB with ClpC is dramatically decreased, leading to McsB release and activation during heat stress. Its kinase activity is counteracted by the protein-arginine-phosphatase YwlE in vivo. Requires McsA for full kinase activity. Functionally, catalyzes the specific phosphorylation of arginine residues in a large number of proteins. Is part of the bacterial stress response system, where it is involved in regulating the global heat shock repressor CtsR; phosphorylates arginine residues in the winged helix-turn-helix domain of CtsR, thereby preventing its binding to DNA and consequently inducing the expression of repressed genes. The transcriptional repressor HrcA, the chaperone GroEL, the unfoldase ClpC, together with several ribosomal subunits, represent other physiological targets of McsB under stress conditions. Protein arginine phosphorylation has a physiologically important role and is involved in the regulation of many critical cellular processes, such as protein homeostasis, motility, competence, and stringent and stress responses, by regulating gene expression and protein activity. Functions as an adapter whose kinase activity is required for ClpCP-mediated degradation of CtsR during heat stress. Is required for the delocalization of competence proteins from the cell poles, probably via a role in the degradation of anchor proteins. This is Protein-arginine kinase from Bacillus subtilis (strain 168).